Reading from the N-terminus, the 130-residue chain is Small ribosomal subunit protein uS11 (130 aa).

Belongs to the universal ribosomal protein uS11 family. Part of the 30S ribosomal subunit. Interacts with proteins S7 and S18. Binds to IF-3.

Functionally, located on the platform of the 30S subunit, it bridges several disparate RNA helices of the 16S rRNA. Forms part of the Shine-Dalgarno cleft in the 70S ribosome. This is Small ribosomal subunit protein uS11 from Campylobacter lari (strain RM2100 / D67 / ATCC BAA-1060).